The sequence spans 285 residues: Cell division protein ZipA (285 aa).

Residue M1 is a topological domain, periplasmic. A helical transmembrane segment spans residues 2-22; the sequence is EIGLREWLIVIGIVVIGGILF. The Cytoplasmic portion of the chain corresponds to 23 to 285; it reads DGWRRMRGSK…FERRQLTHKR (263 aa). Residues 49-88 form a disordered region; sequence AVSENSELLGPSRSVDFPQGAGFEPDEENLPSLSVRGPSR.

The protein belongs to the ZipA family. In terms of assembly, interacts with FtsZ via their C-terminal domains.

The protein resides in the cell inner membrane. Its function is as follows. Essential cell division protein that stabilizes the FtsZ protofilaments by cross-linking them and that serves as a cytoplasmic membrane anchor for the Z ring. Also required for the recruitment to the septal ring of downstream cell division proteins. This chain is Cell division protein ZipA, found in Azotobacter vinelandii (strain DJ / ATCC BAA-1303).